The following is a 348-amino-acid chain: Protein RecA (348 aa).

Residue glycine 66–threonine 73 participates in ATP binding.

It belongs to the RecA family.

The protein localises to the cytoplasm. In terms of biological role, can catalyze the hydrolysis of ATP in the presence of single-stranded DNA, the ATP-dependent uptake of single-stranded DNA by duplex DNA, and the ATP-dependent hybridization of homologous single-stranded DNAs. It interacts with LexA causing its activation and leading to its autocatalytic cleavage. This Neisseria meningitidis serogroup B (strain ATCC BAA-335 / MC58) protein is Protein RecA.